The chain runs to 132 residues: Phosphoribosyl-AMP cyclohydrolase (132 aa).

D79 contributes to the Mg(2+) binding site. C80 is a Zn(2+) binding site. Positions 81 and 83 each coordinate Mg(2+). Residues C100 and C107 each contribute to the Zn(2+) site.

The protein belongs to the PRA-CH family. As to quaternary structure, homodimer. The cofactor is Mg(2+). It depends on Zn(2+) as a cofactor.

It localises to the cytoplasm. The enzyme catalyses 1-(5-phospho-beta-D-ribosyl)-5'-AMP + H2O = 1-(5-phospho-beta-D-ribosyl)-5-[(5-phospho-beta-D-ribosylamino)methylideneamino]imidazole-4-carboxamide. It participates in amino-acid biosynthesis; L-histidine biosynthesis; L-histidine from 5-phospho-alpha-D-ribose 1-diphosphate: step 3/9. Its function is as follows. Catalyzes the hydrolysis of the adenine ring of phosphoribosyl-AMP. The protein is Phosphoribosyl-AMP cyclohydrolase of Delftia acidovorans (strain DSM 14801 / SPH-1).